A 178-amino-acid chain; its full sequence is Small ribosomal subunit protein uS5 (178 aa).

Positions 15–78 (FEEKIIEIRR…SAAKRNIVEV (64 aa)) constitute an S5 DRBM domain.

It belongs to the universal ribosomal protein uS5 family. In terms of assembly, part of the 30S ribosomal subunit. Contacts proteins S4 and S8.

Functionally, with S4 and S12 plays an important role in translational accuracy. Located at the back of the 30S subunit body where it stabilizes the conformation of the head with respect to the body. This Thermotoga maritima (strain ATCC 43589 / DSM 3109 / JCM 10099 / NBRC 100826 / MSB8) protein is Small ribosomal subunit protein uS5.